A 361-amino-acid chain; its full sequence is Phospho-N-acetylmuramoyl-pentapeptide-transferase (361 aa).

The next 10 membrane-spanning stretches (helical) occupy residues 28 to 48, 74 to 94, 99 to 119, 133 to 153, 168 to 188, 203 to 223, 236 to 256, 263 to 283, 288 to 308, and 338 to 358; these read LAIIITLSLSFITGPILIKFL, TMGGIMIILSSCLSTLLLADL, TWITLFGFISFGIIGFMDDYA, SKLLLQGIISFIICVLLEYLD, LSLDLGYFYIVFAIFVIVGSS, VPIAFTAGSFALISYLVGNLI, TGELTVLCAGLVGSCLGFLWF, VFMGDTGSLSLGGVLGIISVI, IVLAIVGGLFVIETASVILQV, and KVVIRFWIISVIFALIGLSSL.

This sequence belongs to the glycosyltransferase 4 family. MraY subfamily. Mg(2+) is required as a cofactor.

Its subcellular location is the cell inner membrane. It carries out the reaction UDP-N-acetyl-alpha-D-muramoyl-L-alanyl-gamma-D-glutamyl-meso-2,6-diaminopimeloyl-D-alanyl-D-alanine + di-trans,octa-cis-undecaprenyl phosphate = di-trans,octa-cis-undecaprenyl diphospho-N-acetyl-alpha-D-muramoyl-L-alanyl-D-glutamyl-meso-2,6-diaminopimeloyl-D-alanyl-D-alanine + UMP. It functions in the pathway cell wall biogenesis; peptidoglycan biosynthesis. Catalyzes the initial step of the lipid cycle reactions in the biosynthesis of the cell wall peptidoglycan: transfers peptidoglycan precursor phospho-MurNAc-pentapeptide from UDP-MurNAc-pentapeptide onto the lipid carrier undecaprenyl phosphate, yielding undecaprenyl-pyrophosphoryl-MurNAc-pentapeptide, known as lipid I. The sequence is that of Phospho-N-acetylmuramoyl-pentapeptide-transferase from Rickettsia massiliae (strain Mtu5).